A 351-amino-acid polypeptide reads, in one-letter code: MTAHDADWSDRDVSGALVPGEGDIDVSLRPRSLREFIGQPRVREQLQLVIEGAKNRGGTPDHILLSGPPGLGKTSLAMIIAAELGSSLRVTSGPALERAGDLAAMLSNLVEHDVLFIDEIHRIARPAEEMLYLAMEDFRVDVVVGKGPGATSIPLEVAPFTLVGATTRSGALTGPLRDRFGFTAHMDFYEPAELQQVLARSAGILGIELGAEAAEEIARRSRGTPRIANRLLRRVRDFAEVRADGVITRDVAKAALAVYDVDELGLDRLDRAVLTALTRSFGGGPVGVSTLAVAVGEEAATVEEVCEPFLVRAGMVARTPRGRVATAQAWTHLGMVPPAGAAGLGQPGLFD.

The interval 1–189 (MTAHDADWSD…FGFTAHMDFY (189 aa)) is large ATPase domain (RuvB-L). ATP contacts are provided by residues Leu-28, Arg-29, Gly-70, Lys-73, Thr-74, Ser-75, 136–138 (EDF), Arg-179, Tyr-189, and Arg-226. Residue Thr-74 participates in Mg(2+) binding. Residues 190 to 260 (EPAELQQVLA…VAKAALAVYD (71 aa)) are small ATPAse domain (RuvB-S). A head domain (RuvB-H) region spans residues 263–351 (ELGLDRLDRA…AGLGQPGLFD (89 aa)). DNA contacts are provided by Arg-318 and Arg-323.

Belongs to the RuvB family. As to quaternary structure, homohexamer. Forms an RuvA(8)-RuvB(12)-Holliday junction (HJ) complex. HJ DNA is sandwiched between 2 RuvA tetramers; dsDNA enters through RuvA and exits via RuvB. An RuvB hexamer assembles on each DNA strand where it exits the tetramer. Each RuvB hexamer is contacted by two RuvA subunits (via domain III) on 2 adjacent RuvB subunits; this complex drives branch migration. In the full resolvosome a probable DNA-RuvA(4)-RuvB(12)-RuvC(2) complex forms which resolves the HJ.

It localises to the cytoplasm. It carries out the reaction ATP + H2O = ADP + phosphate + H(+). Functionally, the RuvA-RuvB-RuvC complex processes Holliday junction (HJ) DNA during genetic recombination and DNA repair, while the RuvA-RuvB complex plays an important role in the rescue of blocked DNA replication forks via replication fork reversal (RFR). RuvA specifically binds to HJ cruciform DNA, conferring on it an open structure. The RuvB hexamer acts as an ATP-dependent pump, pulling dsDNA into and through the RuvAB complex. RuvB forms 2 homohexamers on either side of HJ DNA bound by 1 or 2 RuvA tetramers; 4 subunits per hexamer contact DNA at a time. Coordinated motions by a converter formed by DNA-disengaged RuvB subunits stimulates ATP hydrolysis and nucleotide exchange. Immobilization of the converter enables RuvB to convert the ATP-contained energy into a lever motion, pulling 2 nucleotides of DNA out of the RuvA tetramer per ATP hydrolyzed, thus driving DNA branch migration. The RuvB motors rotate together with the DNA substrate, which together with the progressing nucleotide cycle form the mechanistic basis for DNA recombination by continuous HJ branch migration. Branch migration allows RuvC to scan DNA until it finds its consensus sequence, where it cleaves and resolves cruciform DNA. In Mycobacterium avium (strain 104), this protein is Holliday junction branch migration complex subunit RuvB.